We begin with the raw amino-acid sequence, 507 residues long: Lysine--tRNA ligase (507 aa).

The 'HIGH' region motif lies at Pro26–Asn34. The 'KMSKS' region motif lies at Ala270 to Ser274.

Belongs to the class-I aminoacyl-tRNA synthetase family.

Its subcellular location is the cytoplasm. It carries out the reaction tRNA(Lys) + L-lysine + ATP = L-lysyl-tRNA(Lys) + AMP + diphosphate. This chain is Lysine--tRNA ligase (lysS), found in Thermoplasma acidophilum (strain ATCC 25905 / DSM 1728 / JCM 9062 / NBRC 15155 / AMRC-C165).